Consider the following 358-residue polypeptide: HLA class I histocompatibility antigen, alpha chain E (358 aa).

The first 21 residues, 1-21 (MVDGTLLLLLSEALALTQTWA), serve as a signal peptide directing secretion. The interval 22-111 (GSHSLKYFHT…LRGYYNQSEA (90 aa)) is alpha-1. The Extracellular portion of the chain corresponds to 22 to 305 (GSHSLKYFHT…KPASQPTIPI (284 aa)). The a peptide antigen site is built by tyrosine 28, glutamate 84, serine 87, asparagine 98, and tyrosine 105. Asparagine 107 is a glycosylation site (N-linked (GlcNAc...) asparagine). The tract at residues 112–203 (GSHTLQWMHG…EKGKETLLHL (92 aa)) is alpha-2. Cysteine 122 and cysteine 185 are joined by a disulfide. A peptide antigen-binding residues include serine 164, lysine 167, glutamine 177, tyrosine 180, and tyrosine 192. Residues 204-295 (EPPKTHVTHH…GLPEPVTLRW (92 aa)) form an alpha-3 region. Residues 206-294 (PKTHVTHHPI…EGLPEPVTLR (89 aa)) enclose the Ig-like C1-type domain. Cysteine 224 and cysteine 280 form a disulfide bridge. A connecting peptide region spans residues 296–305 (KPASQPTIPI). Residues 306–329 (VGIIAGLVLLGSVVSGAVVAAVIW) form a helical membrane-spanning segment. The Cytoplasmic segment spans residues 330–358 (RKKSSGGKGGSYSKAEWSDSAQGSESHSL). The tract at residues 333–358 (SSGGKGGSYSKAEWSDSAQGSESHSL) is disordered. Over residues 348-358 (DSAQGSESHSL) the composition is skewed to polar residues. The residue at position 353 (serine 353) is a Phosphoserine.

Belongs to the MHC class I family. As to quaternary structure, forms a heterotrimer with B2M and a self- or a pathogen-derived peptide (peptide-bound HLA-E-B2M). Similarly to MHC class Ia assembly, HLA-E-B2M heterodimer interacts with components of the antigen processing machinery TAPBP and TAP1-TAP2 complex; this interaction is required for peptide loading and translocation to the cell surface. Interacts with CALCR; this interaction is required for appropriate folding. The optimum binding peptide is a nonamer (VL9) that is primarily derived from amino-acid residues 3-11 of the signal sequences of most HLA-A, -B, -C and -G molecules. The VL9 peptide anchors to five main sites in the peptide-binding groove of HLA-E. Peptide-bound HLA-E-B2M complex interacts with KLRD1-KLRC1 receptor on NK cells. Binds with lower affinity to activating KLRD1-KLRC2. The common subunit KLRC1 plays a prominent role in directly interacting with HLA-E. Peptide-bound HLA-E-B2M interacts with the alpha-beta TCR on unconventional CD8+ T cells. Peptide-free HLA-E interacts with HLA-F-B2M complex; this interaction may regulate the intracellular trafficking and the stability of peptide-free MHC class I open conformers (OCs). Post-translationally, N-glycosylated. In terms of processing, the soluble form (sHLA-E) can be partly produced by proteolytic cleavage at the cell surface (shedding) by a matrix metalloproteinase. Alternative splicing is also suggested as a mechanism for generation of sHLA-E, although it remains to be proved. Expressed in secretory endometrial cells during pregnancy (at protein level). The expression in nonlymphoid tissues is restricted to endothelial cells from all types of vessels, including arteries, veins, capillaries, and lymphatics (at protein level). In lymphoid organs, it is mainly expressed in endothelial venules, B and T cells, monocytes, macrophages, NK cells and megakaryocytes (at protein level).

The protein localises to the cell membrane. It localises to the golgi apparatus membrane. It is found in the secreted. In terms of biological role, non-classical major histocompatibility class Ib molecule involved in immune self-nonself discrimination. In complex with B2M/beta-2-microglobulin binds nonamer self-peptides derived from the signal sequence of classical MHC class Ia molecules (VL9 peptides - VMAPRT[V/L][L/V/I/F]L). Peptide-bound HLA-E-B2M heterotrimeric complex primarily functions as a ligand for natural killer (NK) cell inhibitory receptor KLRD1-KLRC1, enabling NK cells to monitor the expression of other MHC class I molecules in healthy cells and to tolerate self. Upon cellular stress, preferentially binds signal sequence-derived peptides from stress-induced chaperones and is no longer recognized by NK cell inhibitory receptor KLRD1-KLRC1, resulting in impaired protection from NK cells. Binds signal sequence-derived peptides from non-classical MHC class Ib HLA-G molecules and acts as a ligand for NK cell activating receptor KLRD1-KLRC2, likely playing a role in the generation and effector functions of adaptive NK cells and in maternal-fetal tolerance during pregnancy. Besides self-peptides, can also bind and present pathogen-derived peptides conformationally similar to VL9 peptides to alpha-beta T cell receptor (TCR) on unconventional CD8-positive cytotoxic T cells, ultimately triggering antimicrobial immune response. Presents HIV gag peptides (immunodominant KAFSPEVIPMF and subdominant KALGPAATL epitopes) predominantly to CD8-positive T cell clones expressing a TRAV17-containing TCR, triggering HLA-E-restricted T cell responses. Presents mycobacterial peptides to HLA-E-restricted CD8-positive T cells eliciting both cytotoxic and immunoregulatory functions. Functionally, (Microbial infection) Viruses like human cytomegalovirus have evolved an escape mechanism whereby virus-induced down-regulation of host MHC class I molecules is coupled to the binding of viral peptides to HLA-E, restoring HLA-E expression and inducing HLA-E-dependent NK cell immune tolerance to infected cells. (Microbial infection) May bind HIV-1 gag/Capsid protein p24-derived peptide (AISPRTLNA) on infected cells and may inhibit NK cell cytotoxicity, a mechanism that allows HIV-1 to escape immune recognition. Its function is as follows. (Microbial infection) Upon SARS-CoV-2 infection, may contribute to functional exhaustion of cytotoxic NK cells and CD8-positive T cells. Binds SARS-CoV-2 S/Spike protein S1-derived peptide (LQPRTFLL) expressed on the surface of lung epithelial cells, inducing NK cell exhaustion and dampening of antiviral immune surveillance. The polypeptide is HLA class I histocompatibility antigen, alpha chain E (Homo sapiens (Human)).